A 427-amino-acid chain; its full sequence is Serine hydroxymethyltransferase (427 aa).

120–122 (GHI) contacts (6S)-5,6,7,8-tetrahydrofolate. At K226 the chain carries N6-(pyridoxal phosphate)lysine.

The protein belongs to the SHMT family. In terms of assembly, homodimer. Pyridoxal 5'-phosphate serves as cofactor.

Its subcellular location is the cytoplasm. It participates in amino-acid biosynthesis; glycine biosynthesis; glycine from L-serine: step 1/1. In terms of biological role, catalyzes the reversible interconversion of serine and glycine with a modified folate serving as the one-carbon carrier. Also exhibits a pteridine-independent aldolase activity toward beta-hydroxyamino acids, producing glycine and aldehydes, via a retro-aldol mechanism. The polypeptide is Serine hydroxymethyltransferase (Pyrococcus furiosus (strain ATCC 43587 / DSM 3638 / JCM 8422 / Vc1)).